We begin with the raw amino-acid sequence, 324 residues long: Delta-aminolevulinic acid dehydratase (324 aa).

Residues C120, C122, and C130 each contribute to the Zn(2+) site. The Schiff-base intermediate with substrate role is filled by K195. 2 residues coordinate 5-aminolevulinate: R205 and R216. E232 contacts Mg(2+). The active-site Schiff-base intermediate with substrate is the K247. Residues S273 and Y312 each coordinate 5-aminolevulinate.

The protein belongs to the ALAD family. In terms of assembly, homooctamer. Zn(2+) is required as a cofactor.

It carries out the reaction 2 5-aminolevulinate = porphobilinogen + 2 H2O + H(+). It participates in porphyrin-containing compound metabolism; protoporphyrin-IX biosynthesis; coproporphyrinogen-III from 5-aminolevulinate: step 1/4. Allosteric enzyme. Stimulated by magnesium ions. Its function is as follows. Catalyzes an early step in the biosynthesis of tetrapyrroles. Binds two molecules of 5-aminolevulinate per subunit, each at a distinct site, and catalyzes their condensation to form porphobilinogen. The polypeptide is Delta-aminolevulinic acid dehydratase (hemB) (Escherichia coli (strain K12)).